Reading from the N-terminus, the 246-residue chain is Polyhedrin (246 aa).

The protein belongs to the polyhedrin family.

Major component of the virus occlusion bodies, which are large proteinaceous structures (polyhedra), that protect the virus from the outside environment for extended periods until they are ingested by insect larvae. The chain is Polyhedrin (PH) from Lepidoptera (butterflies and moths).